We begin with the raw amino-acid sequence, 92 residues long: Phosphoribosyl-ATP pyrophosphatase (92 aa).

It belongs to the PRA-PH family.

It localises to the cytoplasm. The catalysed reaction is 1-(5-phospho-beta-D-ribosyl)-ATP + H2O = 1-(5-phospho-beta-D-ribosyl)-5'-AMP + diphosphate + H(+). It participates in amino-acid biosynthesis; L-histidine biosynthesis; L-histidine from 5-phospho-alpha-D-ribose 1-diphosphate: step 2/9. The protein is Phosphoribosyl-ATP pyrophosphatase of Leptospira biflexa serovar Patoc (strain Patoc 1 / ATCC 23582 / Paris).